Here is a 401-residue protein sequence, read N- to C-terminus: CinA-like protein (401 aa).

It belongs to the CinA family.

The chain is CinA-like protein from Thermosipho melanesiensis (strain DSM 12029 / CIP 104789 / BI429).